The sequence spans 340 residues: Ribose-phosphate pyrophosphokinase (340 aa).

ATP contacts are provided by residues N47–E49 and R106–Q107. Mg(2+)-binding residues include H140 and D182. The active site involves K206. D-ribose 5-phosphate-binding positions include R208, D234, and D238–T242.

It belongs to the ribose-phosphate pyrophosphokinase family. Class I subfamily. As to quaternary structure, homohexamer. Mg(2+) is required as a cofactor.

The protein localises to the cytoplasm. The enzyme catalyses D-ribose 5-phosphate + ATP = 5-phospho-alpha-D-ribose 1-diphosphate + AMP + H(+). It participates in metabolic intermediate biosynthesis; 5-phospho-alpha-D-ribose 1-diphosphate biosynthesis; 5-phospho-alpha-D-ribose 1-diphosphate from D-ribose 5-phosphate (route I): step 1/1. Involved in the biosynthesis of the central metabolite phospho-alpha-D-ribosyl-1-pyrophosphate (PRPP) via the transfer of pyrophosphoryl group from ATP to 1-hydroxyl of ribose-5-phosphate (Rib-5-P). The protein is Ribose-phosphate pyrophosphokinase of Bifidobacterium longum (strain NCC 2705).